Consider the following 304-residue polypeptide: Thymidylate synthase (304 aa).

DUMP-binding positions include arginine 30 and 157-158 (RR). Cysteine 177 serves as the catalytic Nucleophile. DUMP-binding positions include 206–209 (RSCD), asparagine 217, and 247–249 (HVY). Aspartate 209 serves as a coordination point for (6R)-5,10-methylene-5,6,7,8-tetrahydrofolate.

The protein belongs to the thymidylate synthase family. In terms of assembly, homodimer.

The protein resides in the nucleus. It carries out the reaction dUMP + (6R)-5,10-methylene-5,6,7,8-tetrahydrofolate = 7,8-dihydrofolate + dTMP. The protein operates within pyrimidine metabolism; dTTP biosynthesis. Its activity is regulated as follows. Inhibited by 5-fluoro-2'-deoxyuridine 5'-monophosphate (FdUMP). Thymidylate synthase required for de novo biosynthesis of pyrimidine deoxyribonucleotides. Required for both nuclear and mitochondrial DNA synthesis. The sequence is that of Thymidylate synthase (CDC21) from Saccharomyces cerevisiae (strain ATCC 204508 / S288c) (Baker's yeast).